Reading from the N-terminus, the 270-residue chain is MRIGIYNNETAESQRVTKVLKTEMKRAGLTYVEKNPEVVITIGGDGTLLSAFHHYQKDLNNIRFVGIHTGHLGFYTDWRSFEIDDLVDSLVKDSGQAVSYPLLDMKATYSDGQIENYIALNESTIRNVTRTMVCDVFINNHLFENFRGDGLCISTPTGSTAYNKSVGGAIVDPNSVGFQLAEMASLNNRVFRTLGSPIIFGADAELILRLRDENGHVLTCDRDQWMLKSEKERYLTELSYKVSKQRIYFAQYRHNNFWNRVKDSFIGGVH.

Asp-45 functions as the Proton acceptor in the catalytic mechanism. NAD(+) is bound by residues 45-46 (DG), 121-122 (NE), Arg-147, Asp-149, 160-165 (TAYNKS), and Ala-184.

Belongs to the NAD kinase family. Requires a divalent metal cation as cofactor.

The protein resides in the cytoplasm. It catalyses the reaction NAD(+) + ATP = ADP + NADP(+) + H(+). Involved in the regulation of the intracellular balance of NAD and NADP, and is a key enzyme in the biosynthesis of NADP. Catalyzes specifically the phosphorylation on 2'-hydroxyl of the adenosine moiety of NAD to yield NADP. The protein is NAD kinase of Limosilactobacillus reuteri subsp. reuteri (strain JCM 1112) (Lactobacillus reuteri).